A 344-amino-acid chain; its full sequence is HTH-type transcriptional regulator XC_2801 (344 aa).

The HTH lysR-type domain occupies 3 to 60 (HDLNDTLIFVKVVEQGSFIAAANSLGLPKTTVSRKVQELETRLGARLLHRTTRRIGLT). The segment at residues 20-39 (FIAAANSLGLPKTTVSRKVQ) is a DNA-binding region (H-T-H motif).

The protein belongs to the LysR transcriptional regulatory family. In terms of assembly, interacts with the cyclic di-GMP effector XC_3703.

With respect to regulation, activity is regulated by cyclic di-GMP. Cyclic di-GMP specifically binds to XC_3703, which inhibits the interaction of the XC_2801-XC_3703 complex with DNA and prevents the transcription of the target genes. In terms of biological role, transcriptional regulator that directly or indirectly regulates the expression of virulence-related genes, including flhB, aaeA, fliL and flgG. Binds to the promoter of the target genes only in the presence of XC_3703. This Xanthomonas campestris pv. campestris (strain 8004) protein is HTH-type transcriptional regulator XC_2801.